Consider the following 886-residue polypeptide: Microsomal triglyceride transfer protein (886 aa).

A signal peptide spans 1 to 24 (MLRLAGLLLCVTSFLSTSSLGANA). Residues 28–662 (LDNDRLYRYS…QSNNALLHGL (635 aa)) enclose the Vitellogenin domain. 2 cysteine pairs are disulfide-bonded: cysteine 174–cysteine 194 and cysteine 440–cysteine 445.

In terms of assembly, heterodimer; heterodimerizes with the protein disulfide isomerase. Interacts with apolipoprotein B.

The protein resides in the endoplasmic reticulum. In terms of biological role, catalyzes the transport of triglyceride, cholesteryl ester, and phospholipid between phospholipid surfaces. Required for the secretion of plasma lipoproteins that contain apolipoprotein B. The sequence is that of Microsomal triglyceride transfer protein from Megalobrama amblycephala (Chinese blunt snout bream).